Here is a 223-residue protein sequence, read N- to C-terminus: Ribonuclease HII (223 aa).

An RNase H type-2 domain is found at 32 to 223; sequence LYIAGVDEVG…LKKRYRDYMS (192 aa). A divalent metal cation contacts are provided by D38, E39, and D130.

It belongs to the RNase HII family. Mn(2+) is required as a cofactor. It depends on Mg(2+) as a cofactor.

It is found in the cytoplasm. It carries out the reaction Endonucleolytic cleavage to 5'-phosphomonoester.. Functionally, endonuclease that specifically degrades the RNA of RNA-DNA hybrids. The protein is Ribonuclease HII of Bartonella henselae (strain ATCC 49882 / DSM 28221 / CCUG 30454 / Houston 1) (Rochalimaea henselae).